We begin with the raw amino-acid sequence, 217 residues long: Octanoyltransferase (217 aa).

One can recognise a BPL/LPL catalytic domain in the interval 32–207 (SESHDELWIV…TFSQLLGYQH (176 aa)). Residues 71-78 (RGGQVTYH), 138-140 (SLG), and 151-153 (GLA) each bind substrate. Catalysis depends on cysteine 169, which acts as the Acyl-thioester intermediate.

It belongs to the LipB family.

It is found in the cytoplasm. It catalyses the reaction octanoyl-[ACP] + L-lysyl-[protein] = N(6)-octanoyl-L-lysyl-[protein] + holo-[ACP] + H(+). It participates in protein modification; protein lipoylation via endogenous pathway; protein N(6)-(lipoyl)lysine from octanoyl-[acyl-carrier-protein]: step 1/2. Its function is as follows. Catalyzes the transfer of endogenously produced octanoic acid from octanoyl-acyl-carrier-protein onto the lipoyl domains of lipoate-dependent enzymes. Lipoyl-ACP can also act as a substrate although octanoyl-ACP is likely to be the physiological substrate. This chain is Octanoyltransferase, found in Shewanella baltica (strain OS223).